The primary structure comprises 100 residues: MDLSPREKDKLLIFTAGLLAERRLARGLKLNYPEAVALISAALLEGARDGRSVAELMHYGTTLLNREQVMEGVPEMIPDIQVEATFPDGTKLVTVHQPIA.

Belongs to the urease gamma subunit family. In terms of assembly, heterotrimer of UreA (gamma), UreB (beta) and UreC (alpha) subunits. Three heterotrimers associate to form the active enzyme.

It localises to the cytoplasm. It carries out the reaction urea + 2 H2O + H(+) = hydrogencarbonate + 2 NH4(+). Its pathway is nitrogen metabolism; urea degradation; CO(2) and NH(3) from urea (urease route): step 1/1. The polypeptide is Urease subunit gamma (Pseudomonas aeruginosa (strain LESB58)).